A 499-amino-acid chain; its full sequence is Potassium channel subfamily K member 5 (499 aa).

Residues 1–7 (MVDRGPL) lie on the Cytoplasmic side of the membrane. A helical membrane pass occupies residues 8–26 (LTSAIIFYLAIGAAIFEVL). A glycan (N-linked (GlcNAc...) asparagine) is linked at N77. The segment at residues 85–112 (WPNAMIFAATVITTIGYGNVAPKTPAGR) is an intramembrane region (pore-forming). Residues T98, I99, G100, and Y101 each coordinate K(+). The tract at residues 98-103 (TIGYGN) is selectivity filter 1. The chain crosses the membrane as a helical span at residues 113–133 (LFCVFYGLFGVPLCLTWISAL). Residues 134–157 (GKFFGGRAKRLGQFLTKRGVSLRK) are Cytoplasmic-facing. The helical transmembrane segment at 158–180 (AQITCTVIFIVWGVLVHLVIPPF) threads the bilayer. The segment at residues 190–215 (YIEGLYYSFITISTIGFGDFVAGVNP) is an intramembrane region (pore-forming). T203, I204, G205, and F206 together coordinate K(+). The interval 203–208 (TIGFGD) is selectivity filter 2. A helical membrane pass occupies residues 230–250 (WIYLGLAWLSLFVNWKVSMFV). Topologically, residues 251 to 325 (EVHKAIKKRR…SGGGETGPGP (75 aa)) are cytoplasmic. Disordered regions lie at residues 312-335 (AMKT…GGLP), 360-388 (QTLR…SPAP), and 428-499 (GLSD…PKGT). Gly residues predominate over residues 316–334 (SGGGETGPGPGLGPQGGGL). Positions 370–382 (RSPDEEAVARAPE) are enriched in basic and acidic residues. Residue S371 is modified to Phosphoserine. Residues 466-480 (SSSESTFTSTESELS) show a composition bias toward low complexity.

The protein belongs to the two pore domain potassium channel (TC 1.A.1.8) family. Homodimer; disulfide-linked. Heterodimer with KCNK16 and KCNK17. As to expression, abundant expression in kidney, also detected in liver, placenta and small intestine. In the kidney, expression is restricted to the distal tubules and collecting ducts. Not expressed in proximal tubules or glomeruli. Expressed in pancreas, in both endocrine (alpha, beta, gamma, delta, and epsilon) and exocrine (acinar and ductal) cells.

The protein localises to the membrane. It carries out the reaction K(+)(in) = K(+)(out). With respect to regulation, the channel conductance is stimulated by extracellular alkaline pH. Inhibited by quinine, quinidine and external acidification. Functionally, k(+) channel that conducts voltage-dependent outward rectifying currents upon membrane depolarization. Voltage sensing is coupled to K(+) electrochemical gradient in an 'ion flux gating' mode where outward but not inward ion flow opens the gate. Homo- and heterodimerizes to form functional channels with distinct regulatory and gating properties. The polypeptide is Potassium channel subfamily K member 5 (Homo sapiens (Human)).